A 388-amino-acid chain; its full sequence is Staphopain A (388 aa).

Residues 1–25 form the signal peptide; it reads MKRNFPKLIALSLIFSLSVTPIANA. A propeptide spanning residues 26–214 is cleaved from the precursor; it reads ESNSNIKAKD…TSQFKSNNYT (189 aa). Catalysis depends on residues C238, H334, and N355.

This sequence belongs to the peptidase C47 family. In terms of assembly, in the cytoplasm, prematurely activated/folded ScpA forms a stable non-covalent complex with ScpB. Cleavage leads to the activation of ScpA probably by an auto-catalytic manner.

Its subcellular location is the secreted. The enzyme catalyses Broad endopeptidase action on proteins including elastin, but rather limited hydrolysis of small-molecule substrates. Assays are conveniently made with hemoglobin, casein or Z-Phe-Arg-NHMec as substrate.. With respect to regulation, prematurely activated/folded staphopain A is inhibited by staphostatin A (ScpB), which is probably required to protect staphylococcal cytoplasmic proteins from degradation by ScpA. Functionally, cysteine protease that plays an important role in the inhibition of host innate immune response. Cleaves host elastins found in connective tissues, pulmonary surfactant protein A in the lungs, and the chemokine receptor CXCR2 on leukocytes. Proteolytic cleavage of surfactant protein A impairs bacterial phagocytosis by neutrophils while CXCR2 degradation blocks neutrophil activation and chemotaxis. Additionally, promotes vascular leakage by activating the plasma kallikerin/kinin system, resulting in hypotension. This is Staphopain A (sspP) from Staphylococcus aureus (strain COL).